Here is a 415-residue protein sequence, read N- to C-terminus: Serine hydroxymethyltransferase (415 aa).

Residues leucine 120 and 124-126 (GHL) each bind (6S)-5,6,7,8-tetrahydrofolate. An N6-(pyridoxal phosphate)lysine modification is found at lysine 229.

This sequence belongs to the SHMT family. Homodimer. Requires pyridoxal 5'-phosphate as cofactor.

The protein resides in the cytoplasm. It catalyses the reaction (6R)-5,10-methylene-5,6,7,8-tetrahydrofolate + glycine + H2O = (6S)-5,6,7,8-tetrahydrofolate + L-serine. It functions in the pathway one-carbon metabolism; tetrahydrofolate interconversion. The protein operates within amino-acid biosynthesis; glycine biosynthesis; glycine from L-serine: step 1/1. Its function is as follows. Catalyzes the reversible interconversion of serine and glycine with tetrahydrofolate (THF) serving as the one-carbon carrier. This reaction serves as the major source of one-carbon groups required for the biosynthesis of purines, thymidylate, methionine, and other important biomolecules. Also exhibits THF-independent aldolase activity toward beta-hydroxyamino acids, producing glycine and aldehydes, via a retro-aldol mechanism. The chain is Serine hydroxymethyltransferase from Pelotomaculum thermopropionicum (strain DSM 13744 / JCM 10971 / SI).